The chain runs to 73 residues: uncharacterized protein (73 aa).

Residues 54–72 (VSFIVAPTVMQVQCLFFFI) form a helical membrane-spanning segment.

Its subcellular location is the membrane. This is an uncharacterized protein from Saccharomyces cerevisiae (strain ATCC 204508 / S288c) (Baker's yeast).